The sequence spans 135 residues: Classical arabinogalactan protein 4 (135 aa).

An N-terminal signal peptide occupies residues 1-21 (MGSKIVQVFLMLALFATSALA). Glutamine 22 is subject to Pyrrolidone carboxylic acid. The tract at residues 22–112 (QAPAPTPTAT…PSDASPAPSA (91 aa)) is disordered. 4-hydroxyproline is present on residues proline 24, proline 26, proline 28, proline 32, proline 33, proline 34, proline 37, proline 38, and proline 39. Residues proline 24, proline 26, proline 28, proline 32, proline 33, proline 34, proline 37, proline 38, and proline 39 are each glycosylated (O-linked (Ara...) hydroxyproline). The segment covering 25-76 (APTPTATPPPATPPPVATPPPVATPPPAATPAPATPPPAATPAPATTPPSVA) has biased composition (pro residues). The segment covering 96–112 (SPSSAPGPSDASPAPSA) has biased composition (low complexity). Serine 111 carries the GPI-anchor amidated serine lipid modification. A propeptide spans 112 to 135 (AAFSNKAFFAGTAFAAIMYAAVLA) (removed in mature form).

This sequence belongs to the classical AGP family. In terms of processing, O-glycosylated on hydroxyprolines; noncontiguous hydroxylproline residues are glycosylated with arabinogalactan. In terms of tissue distribution, highly expressed in roots, flowers and leaves.

The protein localises to the cell membrane. Its function is as follows. Proteoglycan that seems to be implicated in diverse developmental roles such as differentiation, cell-cell recognition, embryogenesis and programmed cell death. The protein is Classical arabinogalactan protein 4 (AGP4) of Arabidopsis thaliana (Mouse-ear cress).